A 343-amino-acid chain; its full sequence is N-acetyl-gamma-glutamyl-phosphate reductase (343 aa).

Residue C149 is part of the active site.

Belongs to the NAGSA dehydrogenase family. Type 1 subfamily.

Its subcellular location is the cytoplasm. It carries out the reaction N-acetyl-L-glutamate 5-semialdehyde + phosphate + NADP(+) = N-acetyl-L-glutamyl 5-phosphate + NADPH + H(+). It functions in the pathway amino-acid biosynthesis; L-arginine biosynthesis; N(2)-acetyl-L-ornithine from L-glutamate: step 3/4. Its function is as follows. Catalyzes the NADPH-dependent reduction of N-acetyl-5-glutamyl phosphate to yield N-acetyl-L-glutamate 5-semialdehyde. The polypeptide is N-acetyl-gamma-glutamyl-phosphate reductase (Methanococcus maripaludis (strain C7 / ATCC BAA-1331)).